A 99-amino-acid polypeptide reads, in one-letter code: Signal recognition particle 19 kDa protein (99 aa).

The protein belongs to the SRP19 family. Part of the signal recognition particle protein translocation system, which is composed of SRP and FtsY. Archaeal SRP consists of a 7S RNA molecule of 300 nucleotides and two protein subunits: SRP54 and SRP19.

Its subcellular location is the cytoplasm. In terms of biological role, involved in targeting and insertion of nascent membrane proteins into the cytoplasmic membrane. Binds directly to 7S RNA and mediates binding of the 54 kDa subunit of the SRP. The sequence is that of Signal recognition particle 19 kDa protein from Ignicoccus hospitalis (strain KIN4/I / DSM 18386 / JCM 14125).